The chain runs to 67 residues: Large ribosomal subunit protein bL35 (67 aa).

It belongs to the bacterial ribosomal protein bL35 family.

The protein is Large ribosomal subunit protein bL35 of Methylorubrum populi (strain ATCC BAA-705 / NCIMB 13946 / BJ001) (Methylobacterium populi).